The sequence spans 178 residues: 2-C-methyl-D-erythritol 2,4-cyclodiphosphate synthase (178 aa).

Asp24, His26, and His61 together coordinate a divalent metal cation. Asp24–His26 lines the 4-CDP-2-C-methyl-D-erythritol 2-phosphate pocket. Thr150–Glu153 contacts 4-CDP-2-C-methyl-D-erythritol 2-phosphate.

This sequence belongs to the IspF family. Homotrimer. Requires a divalent metal cation as cofactor.

The catalysed reaction is 4-CDP-2-C-methyl-D-erythritol 2-phosphate = 2-C-methyl-D-erythritol 2,4-cyclic diphosphate + CMP. The protein operates within isoprenoid biosynthesis; isopentenyl diphosphate biosynthesis via DXP pathway; isopentenyl diphosphate from 1-deoxy-D-xylulose 5-phosphate: step 4/6. Its function is as follows. Involved in the biosynthesis of isopentenyl diphosphate (IPP) and dimethylallyl diphosphate (DMAPP), two major building blocks of isoprenoid compounds. Catalyzes the conversion of 4-diphosphocytidyl-2-C-methyl-D-erythritol 2-phosphate (CDP-ME2P) to 2-C-methyl-D-erythritol 2,4-cyclodiphosphate (ME-CPP) with a corresponding release of cytidine 5-monophosphate (CMP). The chain is 2-C-methyl-D-erythritol 2,4-cyclodiphosphate synthase from Chlamydia trachomatis serovar A (strain ATCC VR-571B / DSM 19440 / HAR-13).